The primary structure comprises 791 residues: Ataxin-1 (791 aa).

Basic and acidic residues predominate over residues 1–30 (MKSNQERSNECLPPKKREIPATSRPSEEKA). The segment at 1 to 36 (MKSNQERSNECLPPKKREIPATSRPSEEKATALPSD) is disordered. A Glycyl lysine isopeptide (Lys-Gly) (interchain with G-Cter in SUMO) cross-link involves residue Lys16. Residues Ser81 and Ser87 each carry the phosphoserine modification. Disordered stretches follow at residues 187-240 (SQAP…TSPP) and 298-402 (EVLN…HRSY). Lys193 participates in a covalent cross-link: Glycyl lysine isopeptide (Lys-Gly) (interchain with G-Cter in SUMO). Position 213 is a phosphoserine (Ser213). Thr218 is modified (phosphothreonine). Polar residues-rich tracts occupy residues 219–236 (QQNQ…SGRA), 312–327 (ASSS…SSKS), and 362–388 (PNSS…TLND). A Phosphoserine modification is found at Ser229. The self-association stretch occupies residues 470–580 (VGSPDMDTPG…TEDFIQSAEI (111 aa)). Positions 514-791 (LVTQAAYPAM…CIEGRSNVGK (278 aa)) are interaction with USP7. Positions 516-742 (TQAAYPAMVQ…FLSKIEPSKP (227 aa)) are RNA-binding. In terms of domain architecture, AXH spans 538–669 (SPTTASPTLP…SLTLKNLKNG (132 aa)). Glycyl lysine isopeptide (Lys-Gly) (interchain with G-Cter in SUMO) cross-links involve residues Lys585, Lys672, and Lys721. Positions 736-774 (KIEPSKPTATRKRRWSAPETRKLEKSEDEPPLTLPKPSL) are disordered. At Ser751 the chain carries Phosphoserine. The Nuclear localization signal signature appears at 770–773 (PKPS).

This sequence belongs to the ATXN1 family. Homooligomer. Interacts with PQBP1, UBQLN4 and USP7. Interacts with ANP32A. Interacts with CIC. Directly interacts with RBPJ; this interaction is disrupted in the presence of Notch intracellular domain. Interacts with ATXN1L; competes with ATXN1L for RBPJ-binding. Found in a complex with CIC and ATXN1L. In terms of processing, ubiquitinated by UBE3A, leading to its degradation by the proteasome. The presence of poly-Gln repeats in trangenic models developed to replicate phenotypes of the spinocerebellar ataxia 1 disease (SCA1) impair ubiquitination and degradation, leading to accumulation of Atxn1 in neurons and subsequent toxicity. Post-translationally, sumoylation is dependent on nuclear localization and phosphorylation at Ser-751. Expressed in the cortex and hypothalamus (at protein level). Widely expressed. In brain, the pattern of distribution is limited to neuron populations.

It is found in the cytoplasm. The protein localises to the nucleus. Chromatin-binding factor that repress Notch signaling in the absence of Notch intracellular domain by acting as a CBF1 corepressor. Binds to the HEY promoter and might assist, along with NCOR2, RBPJ-mediated repression. May be involved in RNA metabolism. In concert with CIC and ATXN1L, involved in brain development. The polypeptide is Ataxin-1 (Atxn1) (Mus musculus (Mouse)).